Here is a 135-residue protein sequence, read N- to C-terminus: Cytochrome b5 (135 aa).

The 77-residue stretch at 4–80 (SKVYSLAEVS…MDEMCVGDID (77 aa)) folds into the Cytochrome b5 heme-binding domain. Residues H39 and H63 each contribute to the heme site. The chain crosses the membrane as a helical span at residues 106-126 (FIIKLLQFLVPLIILGVAVGI).

This sequence belongs to the cytochrome b5 family.

Its subcellular location is the endoplasmic reticulum membrane. It is found in the microsome membrane. Functionally, membrane bound hemoprotein which function as an electron carrier for several membrane bound oxygenases. In Cuscuta reflexa (Southern Asian dodder), this protein is Cytochrome b5.